The following is a 1939-amino-acid chain: Myosin-4 (1939 aa).

The region spanning 33 to 82 (DAKTSVFVVDPKESYVKAIVQSREGGKVTAKTEAGATVTVKEDQVFSMNP) is the Myosin N-terminal SH3-like domain. Thr64 and Thr69 each carry phosphothreonine. Ser79 carries the post-translational modification Phosphoserine. The Myosin motor domain maps to 86-782 (DKIEDMAMMT…LLGTLEEMRD (697 aa)). Lys130 carries the N6,N6,N6-trimethyllysine modification. An ATP-binding site is contributed by 179–186 (GESGAGKT). Tyr389 is subject to Phosphotyrosine. A Phosphothreonine modification is found at Thr391. The residue at position 392 (Ser392) is a Phosphoserine. Residue Thr419 is modified to Phosphothreonine. Tyr424 carries the phosphotyrosine modification. Ser625 is modified (phosphoserine). Residues 659 to 681 (LNKLMTNLRSTHPHFVRCIIPNE) form an actin-binding region. Pros-methylhistidine is present on His757. The tract at residues 761–775 (KFGHTKVFFKAGLLG) is actin-binding. Thr776 carries the post-translational modification Phosphothreonine. The region spanning 785–814 (LAQLITRTQAICRGFLMRVEFRKMMERRES) is the IQ domain. Residues 843–1939 (LLKSAETEKE…EVHTKVISEE (1097 aa)) adopt a coiled-coil conformation. Phosphoserine occurs at positions 1092, 1162, and 1237. A Phosphothreonine modification is found at Thr1241. Residue Ser1243 is modified to Phosphoserine. At Thr1255 the chain carries Phosphothreonine. Ser1261 carries the post-translational modification Phosphoserine. The residue at position 1265 (Thr1265) is a Phosphothreonine. Ser1278 is modified (phosphoserine). Phosphothreonine is present on Thr1286. 5 positions are modified to phosphoserine: Ser1288, Ser1292, Ser1303, Ser1306, and Ser1413. Tyr1464 carries the post-translational modification Phosphotyrosine. Phosphothreonine is present on Thr1467. Phosphoserine is present on Ser1474. Tyr1492 is subject to Phosphotyrosine. Ser1495 is subject to Phosphoserine. Thr1501 carries the post-translational modification Phosphothreonine. Phosphoserine is present on Ser1514. Thr1517 carries the phosphothreonine modification. Residues Ser1542, Ser1547, Ser1554, Ser1574, Ser1600, Ser1603, Ser1714, and Ser1726 each carry the phosphoserine modification. Phosphothreonine occurs at positions 1730 and 1736. Residue Ser1739 is modified to Phosphoserine.

This sequence belongs to the TRAFAC class myosin-kinesin ATPase superfamily. Myosin family. Muscle myosin is a hexameric protein that consists of 2 heavy chain subunits (MHC), 2 alkali light chain subunits (MLC) and 2 regulatory light chain subunits (MLC-2).

The protein resides in the cytoplasm. Its subcellular location is the myofibril. In terms of biological role, muscle contraction. In Homo sapiens (Human), this protein is Myosin-4 (MYH4).